The following is a 257-amino-acid chain: Protein orai-2 (257 aa).

A run of 4 helical transmembrane segments spans residues 62-79 (ASSR…VAMV), 94-114 (LIAF…ALLI), 156-176 (LGIL…FLPI), and 201-221 (LVST…TIHF).

Belongs to the Orai family.

Its subcellular location is the membrane. Ca(2+) release-activated Ca(2+)-like (CRAC-like) channel subunit which mediates Ca(2+) influx and increase in Ca(2+)-selective current by synergy with the Ca(2+) sensor, stim1. The sequence is that of Protein orai-2 (orai2) from Xenopus laevis (African clawed frog).